We begin with the raw amino-acid sequence, 315 residues long: 4-hydroxy-3-methylbut-2-enyl diphosphate reductase (315 aa).

[4Fe-4S] cluster is bound at residue Cys-12. 2 residues coordinate (2E)-4-hydroxy-3-methylbut-2-enyl diphosphate: His-41 and His-74. The dimethylallyl diphosphate site is built by His-41 and His-74. Residues His-41 and His-74 each coordinate isopentenyl diphosphate. Residue Cys-96 coordinates [4Fe-4S] cluster. Residue His-124 coordinates (2E)-4-hydroxy-3-methylbut-2-enyl diphosphate. Position 124 (His-124) interacts with dimethylallyl diphosphate. Residue His-124 participates in isopentenyl diphosphate binding. Glu-126 functions as the Proton donor in the catalytic mechanism. (2E)-4-hydroxy-3-methylbut-2-enyl diphosphate is bound at residue Thr-168. Position 198 (Cys-198) interacts with [4Fe-4S] cluster. (2E)-4-hydroxy-3-methylbut-2-enyl diphosphate contacts are provided by Ser-226, Ser-227, Asn-228, and Ser-270. Positions 226, 227, 228, and 270 each coordinate dimethylallyl diphosphate. Residues Ser-226, Ser-227, Asn-228, and Ser-270 each coordinate isopentenyl diphosphate.

It belongs to the IspH family. [4Fe-4S] cluster is required as a cofactor.

It catalyses the reaction isopentenyl diphosphate + 2 oxidized [2Fe-2S]-[ferredoxin] + H2O = (2E)-4-hydroxy-3-methylbut-2-enyl diphosphate + 2 reduced [2Fe-2S]-[ferredoxin] + 2 H(+). It carries out the reaction dimethylallyl diphosphate + 2 oxidized [2Fe-2S]-[ferredoxin] + H2O = (2E)-4-hydroxy-3-methylbut-2-enyl diphosphate + 2 reduced [2Fe-2S]-[ferredoxin] + 2 H(+). The protein operates within isoprenoid biosynthesis; dimethylallyl diphosphate biosynthesis; dimethylallyl diphosphate from (2E)-4-hydroxy-3-methylbutenyl diphosphate: step 1/1. It participates in isoprenoid biosynthesis; isopentenyl diphosphate biosynthesis via DXP pathway; isopentenyl diphosphate from 1-deoxy-D-xylulose 5-phosphate: step 6/6. Its function is as follows. Catalyzes the conversion of 1-hydroxy-2-methyl-2-(E)-butenyl 4-diphosphate (HMBPP) into a mixture of isopentenyl diphosphate (IPP) and dimethylallyl diphosphate (DMAPP). Acts in the terminal step of the DOXP/MEP pathway for isoprenoid precursor biosynthesis. This chain is 4-hydroxy-3-methylbut-2-enyl diphosphate reductase, found in Pseudomonas savastanoi pv. phaseolicola (strain 1448A / Race 6) (Pseudomonas syringae pv. phaseolicola (strain 1448A / Race 6)).